A 273-amino-acid chain; its full sequence is Putative cysteine-rich repeat secretory protein 40 (273 aa).

Residues 1–32 (MYPSCSLLQRLVWFPFLALVATQLLFIRNVSS) form the signal peptide. 2 consecutive Gnk2-homologous domains span residues 39 to 141 (YLHH…SISV) and 151 to 264 (YENN…LYPF).

It belongs to the cysteine-rich repeat secretory protein family.

It localises to the secreted. The chain is Putative cysteine-rich repeat secretory protein 40 (CRRSP40) from Arabidopsis thaliana (Mouse-ear cress).